The following is a 22-amino-acid chain: Odorant-binding protein 1 (22 aa).

This sequence belongs to the calycin superfamily. Lipocalin family. As to quaternary structure, homodimer. The N-terminus is blocked.

Functionally, binds the chemical odorant, 2-isobutyl-3-methoxypyrazine. This chain is Odorant-binding protein 1, found in Oryctolagus cuniculus (Rabbit).